Here is a 290-residue protein sequence, read N- to C-terminus: Succinate dehydrogenase [ubiquinone] iron-sulfur subunit, mitochondrial (290 aa).

The transit peptide at 1–38 directs the protein to the mitochondrion; sequence MAAAVVGVSLRRGVPARFLRAGLRPVRGLEAVHGICRG. One can recognise a 2Fe-2S ferredoxin-type domain in the interval 50-143; sequence KKFSIYRWDP…TTKIYPLPHM (94 aa). [2Fe-2S] cluster contacts are provided by C103, C108, C111, and C123. Positions 186 to 216 constitute a 4Fe-4S ferredoxin-type domain; that stretch reads DRQKLDGLYECILCACCSTSCPSYWWNGDKY. [4Fe-4S] cluster contacts are provided by C196, C199, and C202. C206 lines the [3Fe-4S] cluster pocket. A ubiquinone is bound at residue W211. The [3Fe-4S] cluster site is built by C253 and C259. C263 contacts [4Fe-4S] cluster.

This sequence belongs to the succinate dehydrogenase/fumarate reductase iron-sulfur protein family. Component of complex II composed of four subunits: the flavoprotein (FP) SDHA, iron-sulfur protein (IP) SDHB, and a cytochrome b560 composed of SDHC and SDHD. It depends on [2Fe-2S] cluster as a cofactor. [3Fe-4S] cluster is required as a cofactor. The cofactor is [4Fe-4S] cluster.

It localises to the mitochondrion inner membrane. It carries out the reaction a quinone + succinate = fumarate + a quinol. The enzyme catalyses (R)-malate + a quinone = enol-oxaloacetate + a quinol. It catalyses the reaction (S)-malate + a quinone = enol-oxaloacetate + a quinol. It functions in the pathway carbohydrate metabolism; tricarboxylic acid cycle; fumarate from succinate (eukaryal route): step 1/1. With respect to regulation, enol-oxaloacetate inhibits the succinate dehydrogenase activity. Iron-sulfur protein (IP) subunit of the succinate dehydrogenase complex (mitochondrial respiratory chain complex II), responsible for transferring electrons from succinate to ubiquinone (coenzyme Q). SDH also oxidizes malate to the non-canonical enol form of oxaloacetate, enol-oxaloacetate. Enol-oxaloacetate, which is a potent inhibitor of the succinate dehydrogenase activity, is further isomerized into keto-oxaloacetate. In Gallus gallus (Chicken), this protein is Succinate dehydrogenase [ubiquinone] iron-sulfur subunit, mitochondrial (SDHB).